A 272-amino-acid polypeptide reads, in one-letter code: EID1-like F-box protein 3 (272 aa).

Residues 29–81 (SGKSGIENERVLVLVFESISWDIHTLCTIASLSRRFCAIARRILWRRLCVNRA) enclose the F-box domain.

This chain is EID1-like F-box protein 3 (EDL3), found in Arabidopsis thaliana (Mouse-ear cress).